Here is a 633-residue protein sequence, read N- to C-terminus: Pesticidal crystal protein Cry2Ad (633 aa).

The protein belongs to the delta endotoxin family.

Promotes colloidosmotic lysis by binding to the midgut epithelial cells of insects. In Bacillus thuringiensis, this protein is Pesticidal crystal protein Cry2Ad (cry2Ad).